A 238-amino-acid chain; its full sequence is 2-C-methyl-D-erythritol 4-phosphate cytidylyltransferase (238 aa).

The protein belongs to the IspD/TarI cytidylyltransferase family. IspD subfamily.

The enzyme catalyses 2-C-methyl-D-erythritol 4-phosphate + CTP + H(+) = 4-CDP-2-C-methyl-D-erythritol + diphosphate. It participates in isoprenoid biosynthesis; isopentenyl diphosphate biosynthesis via DXP pathway; isopentenyl diphosphate from 1-deoxy-D-xylulose 5-phosphate: step 2/6. Functionally, catalyzes the formation of 4-diphosphocytidyl-2-C-methyl-D-erythritol from CTP and 2-C-methyl-D-erythritol 4-phosphate (MEP). This Acinetobacter baumannii (strain AYE) protein is 2-C-methyl-D-erythritol 4-phosphate cytidylyltransferase.